Here is a 150-residue protein sequence, read N- to C-terminus: 3-dehydroquinate dehydratase (150 aa).

The active-site Proton acceptor is the tyrosine 26. Substrate is bound by residues asparagine 77, histidine 83, and aspartate 90. Histidine 103 (proton donor) is an active-site residue. Substrate contacts are provided by residues 104–105 (IS) and arginine 114.

The protein belongs to the type-II 3-dehydroquinase family. As to quaternary structure, homododecamer.

It catalyses the reaction 3-dehydroquinate = 3-dehydroshikimate + H2O. It functions in the pathway metabolic intermediate biosynthesis; chorismate biosynthesis; chorismate from D-erythrose 4-phosphate and phosphoenolpyruvate: step 3/7. Catalyzes a trans-dehydration via an enolate intermediate. In Buchnera aphidicola subsp. Acyrthosiphon pisum (strain 5A), this protein is 3-dehydroquinate dehydratase.